A 93-amino-acid chain; its full sequence is Small ribosomal subunit protein uS19 (93 aa).

It belongs to the universal ribosomal protein uS19 family.

Protein S19 forms a complex with S13 that binds strongly to the 16S ribosomal RNA. The sequence is that of Small ribosomal subunit protein uS19 from Pediococcus pentosaceus (strain ATCC 25745 / CCUG 21536 / LMG 10740 / 183-1w).